The chain runs to 78 residues: Mandibular organ-inhibiting hormone 2 (78 aa).

Disulfide bonds link Cys7/Cys44, Cys24/Cys40, and Cys27/Cys53.

Belongs to the arthropod CHH/MIH/GIH/VIH hormone family. As to expression, produced by the medulla terminalis X-organ in the eyestalks and transported to the sinus gland where it is stored and released.

Its subcellular location is the secreted. In terms of biological role, represses the synthesis of methyl farnesoate, the precursor of insect juvenile hormone III in the mandibular organ. The polypeptide is Mandibular organ-inhibiting hormone 2 (Cancer pagurus (Rock crab)).